The chain runs to 308 residues: Ribonuclease HIII (308 aa).

Residues 91–308 enclose the RNase H type-2 domain; it reads KNVIGSDEVG…TEKALKMVKK (218 aa). The a divalent metal cation site is built by aspartate 97, glutamate 98, and aspartate 202.

Belongs to the RNase HII family. RnhC subfamily. The cofactor is Mn(2+). Requires Mg(2+) as cofactor.

The protein localises to the cytoplasm. It catalyses the reaction Endonucleolytic cleavage to 5'-phosphomonoester.. In terms of biological role, endonuclease that specifically degrades the RNA of RNA-DNA hybrids. The chain is Ribonuclease HIII from Listeria monocytogenes serovar 1/2a (strain ATCC BAA-679 / EGD-e).